Consider the following 239-residue polypeptide: tRNA pseudouridine synthase C (239 aa).

Asp54 is a catalytic residue.

This sequence belongs to the pseudouridine synthase RluA family.

It carries out the reaction uridine(65) in tRNA = pseudouridine(65) in tRNA. Its function is as follows. Responsible for synthesis of pseudouridine from uracil-65 in transfer RNAs. In Haemophilus influenzae (strain ATCC 51907 / DSM 11121 / KW20 / Rd), this protein is tRNA pseudouridine synthase C (truC).